A 586-amino-acid chain; its full sequence is Anaerobic glycerol-3-phosphate dehydrogenase subunit A1 (586 aa).

6 to 34 (SVLVIGGGSTGTGIARDLAMRGLDVTLVE) is a binding site for FAD. The segment at 559 to 586 (GGAVADGGRERAADRADDDALGGADGDN) is disordered. Residues 574-586 (ADDDALGGADGDN) are compositionally biased toward acidic residues.

Belongs to the FAD-dependent glycerol-3-phosphate dehydrogenase family. Composed of a catalytic GlpA/B dimer and of membrane bound GlpC. It depends on FAD as a cofactor. FMN serves as cofactor.

It localises to the cell membrane. It catalyses the reaction a quinone + sn-glycerol 3-phosphate = dihydroxyacetone phosphate + a quinol. It functions in the pathway polyol metabolism; glycerol degradation via glycerol kinase pathway; glycerone phosphate from sn-glycerol 3-phosphate (anaerobic route): step 1/1. With respect to regulation, up-regulated by glycerol and no inhibition by glucose. Its function is as follows. Conversion of glycerol 3-phosphate to dihydroxyacetone phosphate. Required for growth on glycerol and for glycerol metabolism. This chain is Anaerobic glycerol-3-phosphate dehydrogenase subunit A1 (gpdA1), found in Haloferax volcanii (strain ATCC 29605 / DSM 3757 / JCM 8879 / NBRC 14742 / NCIMB 2012 / VKM B-1768 / DS2) (Halobacterium volcanii).